The primary structure comprises 241 residues: Ribonuclease PH (241 aa).

Residues R89 and 127–129 (GTR) contribute to the phosphate site.

The protein belongs to the RNase PH family. In terms of assembly, homohexameric ring arranged as a trimer of dimers.

It carries out the reaction tRNA(n+1) + phosphate = tRNA(n) + a ribonucleoside 5'-diphosphate. In terms of biological role, phosphorolytic 3'-5' exoribonuclease that plays an important role in tRNA 3'-end maturation. Removes nucleotide residues following the 3'-CCA terminus of tRNAs; can also add nucleotides to the ends of RNA molecules by using nucleoside diphosphates as substrates, but this may not be physiologically important. Probably plays a role in initiation of 16S rRNA degradation (leading to ribosome degradation) during starvation. The polypeptide is Ribonuclease PH (Xylella fastidiosa (strain M23)).